A 72-amino-acid chain; its full sequence is Translation initiation factor IF-1 (72 aa).

The 72-residue stretch at methionine 1 to lysine 72 folds into the S1-like domain.

Belongs to the IF-1 family. In terms of assembly, component of the 30S ribosomal translation pre-initiation complex which assembles on the 30S ribosome in the order IF-2 and IF-3, IF-1 and N-formylmethionyl-tRNA(fMet); mRNA recruitment can occur at any time during PIC assembly.

Its subcellular location is the cytoplasm. In terms of biological role, one of the essential components for the initiation of protein synthesis. Stabilizes the binding of IF-2 and IF-3 on the 30S subunit to which N-formylmethionyl-tRNA(fMet) subsequently binds. Helps modulate mRNA selection, yielding the 30S pre-initiation complex (PIC). Upon addition of the 50S ribosomal subunit IF-1, IF-2 and IF-3 are released leaving the mature 70S translation initiation complex. The polypeptide is Translation initiation factor IF-1 (Lachnoclostridium phytofermentans (strain ATCC 700394 / DSM 18823 / ISDg) (Clostridium phytofermentans)).